A 523-amino-acid chain; its full sequence is NAD(P)H-quinone oxidoreductase subunit 2 (523 aa).

13 helical membrane passes run 29-49, 57-77, 94-114, 132-152, 182-202, 221-241, 255-275, 291-311, 317-337, 345-365, 389-409, 424-444, and 477-497; these read AVLP…VDLA, WVPP…ALQW, LAVA…LISW, LAAT…SIFI, LLVG…LYGL, PIAA…IAAV, PTPV…ALAL, LLFT…ALAQ, MLAY…VCGT, VLYM…IILF, LGLS…GFFG, LLVV…ISVI, and VALI…NPLF.

This sequence belongs to the complex I subunit 2 family. As to quaternary structure, NDH-1 can be composed of about 15 different subunits; different subcomplexes with different compositions have been identified which probably have different functions.

The protein resides in the cellular thylakoid membrane. It catalyses the reaction a plastoquinone + NADH + (n+1) H(+)(in) = a plastoquinol + NAD(+) + n H(+)(out). The enzyme catalyses a plastoquinone + NADPH + (n+1) H(+)(in) = a plastoquinol + NADP(+) + n H(+)(out). Functionally, NDH-1 shuttles electrons from an unknown electron donor, via FMN and iron-sulfur (Fe-S) centers, to quinones in the respiratory and/or the photosynthetic chain. The immediate electron acceptor for the enzyme in this species is believed to be plastoquinone. Couples the redox reaction to proton translocation, and thus conserves the redox energy in a proton gradient. Cyanobacterial NDH-1 also plays a role in inorganic carbon-concentration. This Synechococcus sp. (strain CC9902) protein is NAD(P)H-quinone oxidoreductase subunit 2.